The primary structure comprises 847 residues: Alanine--tRNA ligase (847 aa).

Zn(2+) is bound by residues His-554, His-558, Cys-656, and His-660.

The protein belongs to the class-II aminoacyl-tRNA synthetase family. Zn(2+) is required as a cofactor.

The protein resides in the cytoplasm. The catalysed reaction is tRNA(Ala) + L-alanine + ATP = L-alanyl-tRNA(Ala) + AMP + diphosphate. Functionally, catalyzes the attachment of alanine to tRNA(Ala) in a two-step reaction: alanine is first activated by ATP to form Ala-AMP and then transferred to the acceptor end of tRNA(Ala). Also edits incorrectly charged Ser-tRNA(Ala) and Gly-tRNA(Ala) via its editing domain. The chain is Alanine--tRNA ligase from Helicobacter pylori (strain HPAG1).